A 166-amino-acid chain; its full sequence is Cofilin-1 (166 aa).

N-acetylalanine is present on Ala2. Phosphoserine is present on residues Ser3 and Ser8. The region spanning 4-153 is the ADF-H domain; it reads GVAVSDGVIK…KDRCTLAEKL (150 aa). Lys13 bears the N6-acetyllysine mark. At Thr25 the chain carries Phosphothreonine. Positions 30 to 34 match the Nuclear localization signal motif; the sequence is KKRKK. Ser41 carries the phosphoserine modification. Tyr68 carries the phosphotyrosine modification. Lys73 is modified (N6-acetyllysine). Lys132 is covalently cross-linked (Glycyl lysine isopeptide (Lys-Gly) (interchain with G-Cter in SUMO2)). Tyr140 is subject to Phosphotyrosine. The residue at position 144 (Lys144) is an N6-acetyllysine. A Phosphoserine modification is found at Ser156.

Belongs to the actin-binding proteins ADF family. As to quaternary structure, can bind G- and F-actin in a 1:1 ratio of cofilin to actin. It is a major component of intranuclear and cytoplasmic actin rods. Interacts with the subcortical maternal complex (SCMC) via interaction with TLE6 and NLRP5. Interacts with C9orf72. Post-translationally, inactivated by phosphorylation on Ser-3. Phosphorylated on Ser-3 in resting cells. Dephosphorylated by PDXP/chronophin; this restores its activity in promoting actin filament depolymerization. The phosphorylation of Ser-24 may prevent recognition of the nuclear localization signal. Phosphorylated via a ARRB1-RAC1-LIMK1-PAK1 cascade upon active ligand stimulation of atypical chemokine receptor ACKR2.

It localises to the nucleus matrix. The protein resides in the cytoplasm. It is found in the cytoskeleton. Its subcellular location is the cell projection. The protein localises to the ruffle membrane. It localises to the lamellipodium membrane. The protein resides in the lamellipodium. It is found in the growth cone. Its subcellular location is the axon. Binds to F-actin and exhibits pH-sensitive F-actin depolymerizing activity. Important for normal progress through mitosis and normal cytokinesis. In conjunction with the subcortical maternal complex (SCMC), plays an essential role for zygotes to progress beyond the first embryonic cell divisions via regulation of actin dynamics. Required for the centralization of the mitotic spindle and symmetric division of zygotes. Plays a role in the regulation of cell morphology and cytoskeletal organization in epithelial cells. Required for the up-regulation of atypical chemokine receptor ACKR2 from endosomal compartment to cell membrane, increasing its efficiency in chemokine uptake and degradation. Required for neural tube morphogenesis and neural crest cell migration. This Bos taurus (Bovine) protein is Cofilin-1 (CFL1).